The chain runs to 256 residues: Tryptophan synthase alpha chain (256 aa).

Active-site proton acceptor residues include Glu46 and Asp57.

It belongs to the TrpA family. In terms of assembly, tetramer of two alpha and two beta chains.

It carries out the reaction (1S,2R)-1-C-(indol-3-yl)glycerol 3-phosphate + L-serine = D-glyceraldehyde 3-phosphate + L-tryptophan + H2O. It participates in amino-acid biosynthesis; L-tryptophan biosynthesis; L-tryptophan from chorismate: step 5/5. In terms of biological role, the alpha subunit is responsible for the aldol cleavage of indoleglycerol phosphate to indole and glyceraldehyde 3-phosphate. The sequence is that of Tryptophan synthase alpha chain from Bacteroides thetaiotaomicron (strain ATCC 29148 / DSM 2079 / JCM 5827 / CCUG 10774 / NCTC 10582 / VPI-5482 / E50).